Reading from the N-terminus, the 72-residue chain is Translation initiation factor IF-1 (72 aa).

In terms of domain architecture, S1-like spans 1 to 72; it reads MAKDGVIEVE…NRGRITYRYK (72 aa).

The protein belongs to the IF-1 family. As to quaternary structure, component of the 30S ribosomal translation pre-initiation complex which assembles on the 30S ribosome in the order IF-2 and IF-3, IF-1 and N-formylmethionyl-tRNA(fMet); mRNA recruitment can occur at any time during PIC assembly.

It is found in the cytoplasm. Its function is as follows. One of the essential components for the initiation of protein synthesis. Stabilizes the binding of IF-2 and IF-3 on the 30S subunit to which N-formylmethionyl-tRNA(fMet) subsequently binds. Helps modulate mRNA selection, yielding the 30S pre-initiation complex (PIC). Upon addition of the 50S ribosomal subunit IF-1, IF-2 and IF-3 are released leaving the mature 70S translation initiation complex. The polypeptide is Translation initiation factor IF-1 (Bifidobacterium adolescentis (strain ATCC 15703 / DSM 20083 / NCTC 11814 / E194a)).